The chain runs to 454 residues: CCA-adding enzyme (454 aa).

ATP is bound by residues Ser59 and Arg62. CTP is bound by residues Ser59 and Arg62. Residues Asp71, Asp73, and Asp125 each contribute to the Mg(2+) site. Residues His148, Lys167, and Tyr176 each contribute to the ATP site. Residues His148, Lys167, and Tyr176 each coordinate CTP.

It belongs to the tRNA nucleotidyltransferase/poly(A) polymerase family. Archaeal CCA-adding enzyme subfamily. As to quaternary structure, homodimer. The cofactor is Mg(2+).

The enzyme catalyses a tRNA precursor + 2 CTP + ATP = a tRNA with a 3' CCA end + 3 diphosphate. It catalyses the reaction a tRNA with a 3' CCA end + 2 CTP + ATP = a tRNA with a 3' CCACCA end + 3 diphosphate. Catalyzes the addition and repair of the essential 3'-terminal CCA sequence in tRNAs without using a nucleic acid template. Adds these three nucleotides in the order of C, C, and A to the tRNA nucleotide-73, using CTP and ATP as substrates and producing inorganic pyrophosphate. tRNA 3'-terminal CCA addition is required both for tRNA processing and repair. Also involved in tRNA surveillance by mediating tandem CCA addition to generate a CCACCA at the 3' terminus of unstable tRNAs. While stable tRNAs receive only 3'-terminal CCA, unstable tRNAs are marked with CCACCA and rapidly degraded. The sequence is that of CCA-adding enzyme from Methanosarcina mazei (strain ATCC BAA-159 / DSM 3647 / Goe1 / Go1 / JCM 11833 / OCM 88) (Methanosarcina frisia).